A 370-amino-acid polypeptide reads, in one-letter code: Spermidine/putrescine import ATP-binding protein PotA 1 (370 aa).

The region spanning 12-250 (VSIRAVRKVY…PGNRFVADFI (239 aa)) is the ABC transporter domain. Residue 48 to 55 (GPSGCGKT) coordinates ATP.

Belongs to the ABC transporter superfamily. Spermidine/putrescine importer (TC 3.A.1.11.1) family. In terms of assembly, the complex is composed of two ATP-binding proteins (PotA), two transmembrane proteins (PotB and PotC) and a solute-binding protein (PotD).

Its subcellular location is the cell inner membrane. The enzyme catalyses ATP + H2O + polyamine-[polyamine-binding protein]Side 1 = ADP + phosphate + polyamineSide 2 + [polyamine-binding protein]Side 1.. In terms of biological role, part of the ABC transporter complex PotABCD involved in spermidine/putrescine import. Responsible for energy coupling to the transport system. This is Spermidine/putrescine import ATP-binding protein PotA 1 from Pseudomonas aeruginosa (strain ATCC 15692 / DSM 22644 / CIP 104116 / JCM 14847 / LMG 12228 / 1C / PRS 101 / PAO1).